Here is a 441-residue protein sequence, read N- to C-terminus: Ribulose bisphosphate carboxylase large chain (441 aa).

The substrate site is built by N89 and T139. K141 serves as the catalytic Proton acceptor. K143 contacts substrate. 3 residues coordinate Mg(2+): K167, D169, and E170. N6-carboxylysine is present on K167. Residue H260 is the Proton acceptor of the active site. Substrate contacts are provided by R261, H293, and S345.

This sequence belongs to the RuBisCO large chain family. Type I subfamily. In terms of assembly, heterohexadecamer of 8 large chains and 8 small chains; disulfide-linked. The disulfide link is formed within the large subunit homodimers. The cofactor is Mg(2+). The disulfide bond which can form in the large chain dimeric partners within the hexadecamer appears to be associated with oxidative stress and protein turnover.

The protein resides in the plastid. It localises to the chloroplast. The enzyme catalyses 2 (2R)-3-phosphoglycerate + 2 H(+) = D-ribulose 1,5-bisphosphate + CO2 + H2O. It catalyses the reaction D-ribulose 1,5-bisphosphate + O2 = 2-phosphoglycolate + (2R)-3-phosphoglycerate + 2 H(+). Functionally, ruBisCO catalyzes two reactions: the carboxylation of D-ribulose 1,5-bisphosphate, the primary event in carbon dioxide fixation, as well as the oxidative fragmentation of the pentose substrate in the photorespiration process. Both reactions occur simultaneously and in competition at the same active site. This chain is Ribulose bisphosphate carboxylase large chain, found in Symphoricarpos albus (Common snowberry).